The chain runs to 272 residues: 3-keto-5-aminohexanoate cleavage enzyme (272 aa).

Glutamate 15 contributes to the (5S)-5-amino-3-oxohexanoate binding site. Zn(2+) is bound by residues histidine 47 and histidine 49. Positions 83, 86, and 107 each coordinate (5S)-5-amino-3-oxohexanoate. Residue glutamate 226 coordinates Zn(2+).

This sequence belongs to the BKACE family. Kce subfamily. In terms of assembly, homotetramer. Zn(2+) serves as cofactor.

It catalyses the reaction (5S)-5-amino-3-oxohexanoate + acetyl-CoA = (3S)-3-aminobutanoyl-CoA + acetoacetate. It functions in the pathway amino-acid degradation; L-lysine degradation via acetate pathway. With respect to regulation, 3-fold increase in activity by addition of 10 mM 2-mercaptoethanol. Addition of CoCl(2) and to a lesser extent MnCl(2) increases the activity but not MgCl(2). Inhibited by phosphate buffer but not by 5,5'-dithio-2-nitrobenzoic acid. In terms of biological role, involved in the anaerobic fermentation of lysine. Catalyzes the reversible reaction between 3-keto-5-aminohexanoate (KAH) and acetyl-CoA to form 3-aminobutyryl-CoA and acetoacetate. The reaction involves the deprotonation of KAH, the nucleophilic addition onto acetyl-CoA and the intramolecular transfer of the CoA moiety. It can also use beta-alanyl-CoA as substrate. This Fusobacterium nucleatum subsp. nucleatum (strain ATCC 25586 / DSM 15643 / BCRC 10681 / CIP 101130 / JCM 8532 / KCTC 2640 / LMG 13131 / VPI 4355) protein is 3-keto-5-aminohexanoate cleavage enzyme.